The chain runs to 50 residues: Small ribosomal subunit protein uS14 (50 aa).

Residues cysteine 15, cysteine 18, cysteine 33, and cysteine 36 each contribute to the Zn(2+) site.

It belongs to the universal ribosomal protein uS14 family. Zinc-binding uS14 subfamily. In terms of assembly, part of the 30S ribosomal subunit. It depends on Zn(2+) as a cofactor.

In terms of biological role, binds 16S rRNA, required for the assembly of 30S particles. The chain is Small ribosomal subunit protein uS14 from Methanosarcina mazei (strain ATCC BAA-159 / DSM 3647 / Goe1 / Go1 / JCM 11833 / OCM 88) (Methanosarcina frisia).